The sequence spans 362 residues: Phosphoserine aminotransferase (362 aa).

Arginine 42 is a binding site for L-glutamate. Pyridoxal 5'-phosphate-binding positions include 76 to 77 (AS), tryptophan 102, threonine 152, aspartate 173, and glutamine 196. Lysine 197 carries the N6-(pyridoxal phosphate)lysine modification. Pyridoxal 5'-phosphate is bound at residue 238 to 239 (NT).

Belongs to the class-V pyridoxal-phosphate-dependent aminotransferase family. SerC subfamily. In terms of assembly, homodimer. Pyridoxal 5'-phosphate is required as a cofactor.

The protein localises to the cytoplasm. It catalyses the reaction O-phospho-L-serine + 2-oxoglutarate = 3-phosphooxypyruvate + L-glutamate. It carries out the reaction 4-(phosphooxy)-L-threonine + 2-oxoglutarate = (R)-3-hydroxy-2-oxo-4-phosphooxybutanoate + L-glutamate. The protein operates within amino-acid biosynthesis; L-serine biosynthesis; L-serine from 3-phospho-D-glycerate: step 2/3. It functions in the pathway cofactor biosynthesis; pyridoxine 5'-phosphate biosynthesis; pyridoxine 5'-phosphate from D-erythrose 4-phosphate: step 3/5. In terms of biological role, catalyzes the reversible conversion of 3-phosphohydroxypyruvate to phosphoserine and of 3-hydroxy-2-oxo-4-phosphonooxybutanoate to phosphohydroxythreonine. In Chromobacterium violaceum (strain ATCC 12472 / DSM 30191 / JCM 1249 / CCUG 213 / NBRC 12614 / NCIMB 9131 / NCTC 9757 / MK), this protein is Phosphoserine aminotransferase.